A 138-amino-acid chain; its full sequence is Cysteine desulfuration protein SufE (138 aa).

C51 (cysteine persulfide intermediate) is an active-site residue.

The protein belongs to the SufE family. In terms of assembly, homodimer. Interacts with SufS.

The protein resides in the cytoplasm. Its pathway is cofactor biosynthesis; iron-sulfur cluster biosynthesis. Functionally, participates in cysteine desulfuration mediated by SufS. Cysteine desulfuration mobilizes sulfur from L-cysteine to yield L-alanine and constitutes an essential step in sulfur metabolism for biosynthesis of a variety of sulfur-containing biomolecules. Functions as a sulfur acceptor for SufS, by mediating the direct transfer of the sulfur atom from the S-sulfanylcysteine of SufS, an intermediate product of cysteine desulfuration process. The chain is Cysteine desulfuration protein SufE from Photorhabdus laumondii subsp. laumondii (strain DSM 15139 / CIP 105565 / TT01) (Photorhabdus luminescens subsp. laumondii).